We begin with the raw amino-acid sequence, 551 residues long: Arginine--tRNA ligase (551 aa).

The 'HIGH' region signature appears at 125–135 (ANPTGPLHIGH).

Belongs to the class-I aminoacyl-tRNA synthetase family. As to quaternary structure, monomer.

The protein resides in the cytoplasm. It carries out the reaction tRNA(Arg) + L-arginine + ATP = L-arginyl-tRNA(Arg) + AMP + diphosphate. This chain is Arginine--tRNA ligase, found in Oleidesulfovibrio alaskensis (strain ATCC BAA-1058 / DSM 17464 / G20) (Desulfovibrio alaskensis).